A 121-amino-acid polypeptide reads, in one-letter code: Large ribosomal subunit protein uL14c (121 aa).

This sequence belongs to the universal ribosomal protein uL14 family. As to quaternary structure, part of the 50S ribosomal subunit.

It is found in the plastid. Its subcellular location is the chloroplast. Its function is as follows. Binds to 23S rRNA. The chain is Large ribosomal subunit protein uL14c from Nephroselmis olivacea (Green alga).